A 175-amino-acid polypeptide reads, in one-letter code: Endothelin-2 (175 aa).

The N-terminal stretch at 1 to 21 is a signal peptide; that stretch reads MVSAWCSIALALLLALHEGKG. The propeptide occupies 22–43; sequence QAAATLEQPASAPKGRGPHLRF. Cystine bridges form between Cys46–Cys60 and Cys48–Cys56. Positions 67 to 175 are excised as a propeptide; sequence VNTAGQTAPY…IPAYSRWRKR (109 aa). Residues 93–108 form an endothelin-like region; sequence CECSTAGDSACATFCH.

It belongs to the endothelin/sarafotoxin family.

Its subcellular location is the secreted. Functionally, vasoconstrictor. This chain is Endothelin-2 (Edn2), found in Mus musculus (Mouse).